The primary structure comprises 247 residues: uncharacterized protein (247 aa).

This sequence belongs to the AIM2 family.

The protein resides in the cytoplasm. It localises to the nucleus. This is an uncharacterized protein from Schizosaccharomyces pombe (strain 972 / ATCC 24843) (Fission yeast).